Consider the following 103-residue polypeptide: Large ribosomal subunit protein bL21 (103 aa).

Belongs to the bacterial ribosomal protein bL21 family. Part of the 50S ribosomal subunit. Contacts protein L20.

In terms of biological role, this protein binds to 23S rRNA in the presence of protein L20. This Chloroflexus aggregans (strain MD-66 / DSM 9485) protein is Large ribosomal subunit protein bL21.